The following is a 2140-amino-acid chain: Dedicator of cytokinesis protein 7 (2140 aa).

Serine 30, serine 180, and serine 182 each carry phosphoserine. The disordered stretch occupies residues 138-183 (FNPNTLDKQKERQKGLPKQVFESDEAPDGNSYQDDQDDLKRRSMSI). A coiled-coil region spans residues 365–395 (FKEADATKNKEKLEKLKSQADQFCQRLGKYR). Lysine 381 is subject to N6-methyllysine. Threonine 450 carries the phosphothreonine modification. Serine 452 is modified (phosphoserine). The C2 DOCK-type domain maps to 561–727 (RNLLYIYPQS…GVFNVEVVAV (167 aa)). Residues serine 862, serine 864, serine 882, serine 888, serine 896, serine 900, and serine 905 each carry the phosphoserine modification. Low complexity predominate over residues 888-901 (SLNLNRSRSLSNSN). A disordered region spans residues 888–971 (SLNLNRSRSL…MSSHTETSSF (84 aa)). Threonine 907 and threonine 909 each carry phosphothreonine. Residues serine 910, serine 929, serine 964, serine 1383, lysine 1390, alanine 1394, glutamate 1398, tyrosine 1421, serine 1425, arginine 1429, serine 1430, serine 1432, serine 1434, and serine 1438 each carry the phosphoserine modification. Residues 943–971 (SNPSPSAESTQAMDRSCNRMSSHTETSSF) show a composition bias toward polar residues. Residues 1678–2114 (KGYQTSPDLR…LQPLINRKIP (437 aa)) form the DOCKER domain. Residue lysine 1962 is modified to N6-acetyllysine. Positions 2086-2112 (DQKEYQRELERNYHRLKEALQPLINRK) form a coiled coil. Serine 2129 carries the post-translational modification Phosphoserine.

It belongs to the DOCK family. As to quaternary structure, component of the DOCK7-induced septin displacement/DISP complex, at least composed of DOCK7, LRCH3 and MYO6. Interacts with TSC1. Interacts with nucleotide-free RAC1 and RAC3. Interacts with TACC3 and CRY1. Interacts with NOD2. In terms of tissue distribution, widely expressed.

The protein resides in the cell projection. It localises to the axon. Functions as a guanine nucleotide exchange factor (GEF), which activates Rac1 and Rac3 Rho small GTPases by exchanging bound GDP for free GTP. Does not have a GEF activity for CDC42. Required for STMN1 'Ser-15' phosphorylation during axon formation and consequently for neuronal polarization. As part of the DISP complex, may regulate the association of septins with actin and thereby regulate the actin cytoskeleton. Has a role in pigmentation. Involved in the regulation of cortical neurogenesis through the control of radial glial cells (RGCs) proliferation versus differentiation; negatively regulates the basal-to-apical interkinetic nuclear migration of RGCs by antagonizing the microtubule growth-promoting function of TACC3. The sequence is that of Dedicator of cytokinesis protein 7 (DOCK7) from Homo sapiens (Human).